Reading from the N-terminus, the 273-residue chain is 2-dehydro-3-deoxyphosphooctonate aldolase (273 aa).

The protein belongs to the KdsA family.

The protein localises to the cytoplasm. It carries out the reaction D-arabinose 5-phosphate + phosphoenolpyruvate + H2O = 3-deoxy-alpha-D-manno-2-octulosonate-8-phosphate + phosphate. It participates in carbohydrate biosynthesis; 3-deoxy-D-manno-octulosonate biosynthesis; 3-deoxy-D-manno-octulosonate from D-ribulose 5-phosphate: step 2/3. The protein operates within bacterial outer membrane biogenesis; lipopolysaccharide biosynthesis. This chain is 2-dehydro-3-deoxyphosphooctonate aldolase, found in Citrifermentans bemidjiense (strain ATCC BAA-1014 / DSM 16622 / JCM 12645 / Bem) (Geobacter bemidjiensis).